The primary structure comprises 141 residues: Large ribosomal subunit protein uL11B (141 aa).

This sequence belongs to the universal ribosomal protein uL11 family. As to quaternary structure, part of the ribosomal stalk of the 50S ribosomal subunit. Interacts with L10 and the large rRNA to form the base of the stalk. L10 forms an elongated spine to which L12 dimers bind in a sequential fashion forming a multimeric L10(L12)X complex. One or more lysine residues are methylated.

Functionally, forms part of the ribosomal stalk which helps the ribosome interact with GTP-bound translation factors. The protein is Large ribosomal subunit protein uL11B of Halalkalibacterium halodurans (strain ATCC BAA-125 / DSM 18197 / FERM 7344 / JCM 9153 / C-125) (Bacillus halodurans).